Consider the following 456-residue polypeptide: Histidine--tRNA ligase (456 aa).

It belongs to the class-II aminoacyl-tRNA synthetase family. In terms of assembly, homodimer.

Its subcellular location is the cytoplasm. The catalysed reaction is tRNA(His) + L-histidine + ATP = L-histidyl-tRNA(His) + AMP + diphosphate + H(+). The protein is Histidine--tRNA ligase of Borreliella afzelii (strain PKo) (Borrelia afzelii).